The sequence spans 122 residues: Large ribosomal subunit protein uL14c (122 aa).

The protein belongs to the universal ribosomal protein uL14 family. In terms of assembly, part of the 50S ribosomal subunit.

It localises to the plastid. The protein localises to the chloroplast. In terms of biological role, binds to 23S rRNA. In Cucumis sativus (Cucumber), this protein is Large ribosomal subunit protein uL14c.